Consider the following 362-residue polypeptide: Microfibril-associated glycoprotein 3 (362 aa).

Positions 1-19 (MKLHCCLFTLVASIIVPAA) are cleaved as a signal peptide. Residues 20–146 (FVLEDVDFNQ…TLRVIFTSGD (127 aa)) lie on the Extracellular side of the membrane. N-linked (GlcNAc...) asparagine glycosylation is found at N36, N41, and N110. Positions 45–137 (PSSFELSASS…SPIRASYSVT (93 aa)) constitute an Ig-like C2-type domain. C73 and C124 form a disulfide bridge. A helical transmembrane segment spans residues 147–167 (MSVYYMIVCLIAFTITLILNV). The Cytoplasmic portion of the chain corresponds to 168–362 (TRLCMMSSHL…KDGAYENSQL (195 aa)). 2 disordered regions span residues 282–306 (GIYVINPEMGRSNSPGGDSDDGSLN) and 319–362 (HLQS…NSQL). The span at 319–337 (HLQSETKSIDTESQGSSHF) shows a compositional bias: polar residues.

Post-translationally, glycosylated.

The protein resides in the cell membrane. In terms of biological role, component of the elastin-associated microfibrils. This chain is Microfibril-associated glycoprotein 3 (MFAP3), found in Pongo abelii (Sumatran orangutan).